A 333-amino-acid chain; its full sequence is MTQKNLLLLCGGGGDEHSISLLSANFFETQLATLPHFNVLRVELNAKGQYRTQAGELCELTNSKQIRFNDQSKAPWDVDYVIPCIHGYPGETGDIQSYFELINLPYFGCDSEASSNCFNKVTAKMWFSALGIRNTPYIFLNEFNQQAIEETERALEKWGSIFIKAASQGSSVGCYRVDNKEQLANSLEEAFKYSPYVVVEKTINARELEVAAYEVDGEIIATKPGEIICASNTFYSFDEKYAENSQAQTVIEADVDEVIAKQIQEYAIKAFKGMKLRHLSRIDFFLTDENEILLNEINTFPGQTQISMFPKMLQNHGHNFAQYLSGNIMAQLK.

The ATP-grasp domain occupies 124–329 (KMWFSALGIR…FAQYLSGNIM (206 aa)). 154–209 (ALEKWGSIFIKAASQGSSVGCYRVDNKEQLANSLEEAFKYSPYVVVEKTINARELE) lines the ATP pocket. D283, E296, and N298 together coordinate Mg(2+).

The protein belongs to the D-alanine--D-alanine ligase family. The cofactor is Mg(2+). Mn(2+) is required as a cofactor.

Its subcellular location is the cytoplasm. The enzyme catalyses 2 D-alanine + ATP = D-alanyl-D-alanine + ADP + phosphate + H(+). It functions in the pathway cell wall biogenesis; peptidoglycan biosynthesis. Cell wall formation. This Shewanella halifaxensis (strain HAW-EB4) protein is D-alanine--D-alanine ligase.